A 769-amino-acid polypeptide reads, in one-letter code: 5-methyltetrahydropteroyltriglutamate--homocysteine methyltransferase (769 aa).

5-methyltetrahydropteroyltri-L-glutamate is bound by residues 17 to 20 and Lys118; that span reads RELK. L-homocysteine is bound by residues 441-443 and Glu494; that span reads IGS. L-methionine-binding positions include 441 to 443 and Glu494; that span reads IGS. 5-methyltetrahydropteroyltri-L-glutamate contacts are provided by residues 525 to 526 and Trp571; that span reads RC. Asp609 contributes to the L-homocysteine binding site. Asp609 contacts L-methionine. Residue Glu615 coordinates 5-methyltetrahydropteroyltri-L-glutamate. Zn(2+) is bound by residues His651, Cys653, and Glu675. His705 acts as the Proton donor in catalysis. Zn(2+) is bound at residue Cys737.

It belongs to the vitamin-B12 independent methionine synthase family. Requires Zn(2+) as cofactor.

The enzyme catalyses 5-methyltetrahydropteroyltri-L-glutamate + L-homocysteine = tetrahydropteroyltri-L-glutamate + L-methionine. It functions in the pathway amino-acid biosynthesis; L-methionine biosynthesis via de novo pathway; L-methionine from L-homocysteine (MetE route): step 1/1. Its function is as follows. Catalyzes the transfer of a methyl group from 5-methyltetrahydrofolate to homocysteine resulting in methionine formation. This Blochmanniella floridana protein is 5-methyltetrahydropteroyltriglutamate--homocysteine methyltransferase.